The sequence spans 299 residues: Taste receptor type 2 member 19 (299 aa).

Met-1 is a topological domain (extracellular). The chain crosses the membrane as a helical span at residues 2–22 (MCFLLIISSILVVFAFVLGNV). The Cytoplasmic portion of the chain corresponds to 23 to 55 (ANGFIALVNVIDWVNTRKISSAEQILTALVVSR). A helical membrane pass occupies residues 56–76 (IGLLWVMLFLWYATVFNSALY). At 77–87 (GLEVRIVASNA) the chain is on the extracellular side. The helical transmembrane segment at 88–108 (WAVTNHFSMWLAASLSIFCLL) threads the bilayer. Over 109–127 (KIANFSNLISLHLKKRIKS) the chain is Cytoplasmic. The helical transmembrane segment at 128–148 (VVLVILLGPLVFLICNLAVIT) threads the bilayer. Topologically, residues 149 to 181 (MDERVWTKEYEGNVTWKIKLRNAIHLSSLTVTT) are extracellular. Asn-161 carries an N-linked (GlcNAc...) asparagine glycan. Residues 182 to 202 (LANLIPFTLSLICFLLLICSL) traverse the membrane as a helical segment. Residues 203–226 (CKHLKKMRLHSKGSQDPSTKVHIK) are Cytoplasmic-facing. The helical transmembrane segment at 227–247 (ALQTVTSFLMLFAIYFLCIIT) threads the bilayer. The Extracellular portion of the chain corresponds to 248 to 259 (STWNLRTQQSKL). The helical transmembrane segment at 260 to 280 (VLLLCQTVAIMYPSFHSFILI) threads the bilayer. The Cytoplasmic segment spans residues 281-299 (MGSRKLKQTFLSVLWQMTR).

The protein belongs to the G-protein coupled receptor T2R family. Expressed in subsets of taste receptor cells of the tongue and exclusively in gustducin-positive cells.

Its subcellular location is the membrane. Functionally, receptor that may play a role in the perception of bitterness and is gustducin-linked. May play a role in sensing the chemical composition of the gastrointestinal content. The activity of this receptor may stimulate alpha gustducin, mediate PLC-beta-2 activation and lead to the gating of TRPM5. The sequence is that of Taste receptor type 2 member 19 (TAS2R19) from Homo sapiens (Human).